Reading from the N-terminus, the 206-residue chain is Shieldin complex subunit 1 (206 aa).

A disordered region spans residues 27–94; that stretch reads SSYEASQRVS…GQLETNEEED (68 aa). Over residues 32-55 the composition is skewed to low complexity; it reads SQRVSQGSSNSLSSLESHPFLSSS. A compositionally biased stretch (polar residues) spans 56 to 74; it reads TTDPDSNSLNTEQKGSWDS.

In terms of assembly, component of the shieldin complex, consisting of SHLD1, SHLD2, SHLD3 and MAD2L2/REV7. Within the complex, SHLD2 forms a scaffold which interacts with a SHLD3-MAD2L2 subcomplex via its N-terminus, and with SHLD1 via its C-terminus. Interacts with ASTE1.

Its subcellular location is the chromosome. Component of the shieldin complex, which plays an important role in repair of DNA double-stranded breaks (DSBs). During G1 and S phase of the cell cycle, the complex functions downstream of TP53BP1 to promote non-homologous end joining (NHEJ) and suppress DNA end resection. Mediates various NHEJ-dependent processes including immunoglobulin class-switch recombination, and fusion of unprotected telomeres. In Mus musculus (Mouse), this protein is Shieldin complex subunit 1.